The primary structure comprises 1009 residues: Anillin-like protein 2 (1009 aa).

Disordered stretches follow at residues 1 to 29 (MYRR…DSNR), 272 to 295 (FGQE…QTIV), and 539 to 558 (GTGY…PTLV). Residues 542–557 (YSASSSGPQFTRSPTL) show a composition bias toward polar residues. Residues 626-657 (SAADKINDSKRQISKLIETIEKTRKHIQLAEI) are a coiled coil. In terms of domain architecture, PH spans 892–1005 (DVEYRGFLYL…WLNAINDTLF (114 aa)).

In terms of tissue distribution, localizes to the surface of the rachis.

In terms of biological role, required to maintain the structure of the rachis, the central cytoplasmic core of the syncytial adult gonad. Failure to maintain the rachis leads to premature dissociation of oocytes and thereby impedes oogenesis. In Caenorhabditis elegans, this protein is Anillin-like protein 2 (ani-2).